Here is a 361-residue protein sequence, read N- to C-terminus: Mitochondrial fission regulator 2 (361 aa).

Residue Ser-137 is modified to Phosphoserine. 2 disordered regions span residues 191–286 (FIDL…VPNM) and 298–322 (LRPV…EWDP). The span at 219-231 (VLPPPPPPPPPPQ) shows a compositional bias: pro residues. Low complexity predominate over residues 232–244 (FSLQPPSSLPMQP). Residues 250-282 (HDIDSLATEMERQLSGVKKTDDSHHSKSQRLRD) are compositionally biased toward basic and acidic residues. Phosphoserine is present on residues Ser-304 and Ser-340.

It belongs to the MTFR1 family. Expressed predominantly in testis (at protein level). Expressed to a lower extent in spleen.

It is found in the mitochondrion. May play a role in mitochondrial aerobic respiration essentially in the testis. Can also promote mitochondrial fission. The chain is Mitochondrial fission regulator 2 (Mtfr2) from Mus musculus (Mouse).